A 224-amino-acid polypeptide reads, in one-letter code: Holliday junction branch migration complex subunit RuvA (224 aa).

The segment at 1 to 67 (MISWLKGEKV…EDGTSLYGFI (67 aa)) is domain I. The domain II stretch occupies residues 68-146 (EVNQRDLFRE…RFTDNDKTIH (79 aa)). The interval 147-155 (ENKKGIEAN) is flexible linker. The domain III stretch occupies residues 156–224 (QFSKYIDEIY…ILMKLSEKTT (69 aa)).

Belongs to the RuvA family. As to quaternary structure, homotetramer. Forms an RuvA(8)-RuvB(12)-Holliday junction (HJ) complex. HJ DNA is sandwiched between 2 RuvA tetramers; dsDNA enters through RuvA and exits via RuvB. An RuvB hexamer assembles on each DNA strand where it exits the tetramer. Each RuvB hexamer is contacted by two RuvA subunits (via domain III) on 2 adjacent RuvB subunits; this complex drives branch migration. In the full resolvosome a probable DNA-RuvA(4)-RuvB(12)-RuvC(2) complex forms which resolves the HJ.

It is found in the cytoplasm. In terms of biological role, the RuvA-RuvB-RuvC complex processes Holliday junction (HJ) DNA during genetic recombination and DNA repair, while the RuvA-RuvB complex plays an important role in the rescue of blocked DNA replication forks via replication fork reversal (RFR). RuvA specifically binds to HJ cruciform DNA, conferring on it an open structure. The RuvB hexamer acts as an ATP-dependent pump, pulling dsDNA into and through the RuvAB complex. HJ branch migration allows RuvC to scan DNA until it finds its consensus sequence, where it cleaves and resolves the cruciform DNA. In Prochlorococcus marinus (strain NATL1A), this protein is Holliday junction branch migration complex subunit RuvA.